The sequence spans 111 residues: Protein RnfH (111 aa).

Residues 88–111 (RRRRVQKTRESGTREGQKWLRGGA) form a disordered region. The segment covering 94-105 (KTRESGTREGQK) has biased composition (basic and acidic residues).

This sequence belongs to the UPF0125 (RnfH) family.

The chain is Protein RnfH from Cupriavidus pinatubonensis (strain JMP 134 / LMG 1197) (Cupriavidus necator (strain JMP 134)).